Reading from the N-terminus, the 388-residue chain is Diphosphomevalonate decarboxylase (388 aa).

(R)-5-diphosphomevalonate-binding positions include 19-22 (YWGK), R74, 153-158 (SGSACR), and T209. The tract at residues 367-388 (QGPQGSSESLINDKGLPKAVAN) is disordered.

It belongs to the diphosphomevalonate decarboxylase family. In terms of assembly, homodimer.

The enzyme catalyses (R)-5-diphosphomevalonate + ATP = isopentenyl diphosphate + ADP + phosphate + CO2. It participates in isoprenoid biosynthesis; isopentenyl diphosphate biosynthesis via mevalonate pathway; isopentenyl diphosphate from (R)-mevalonate: step 3/3. Its function is as follows. Diphosphomevalonate decarboxylase; part of the second module of ergosterol biosynthesis pathway that includes the middle steps of the pathway. The second module is carried out in the vacuole and involves the formation of farnesyl diphosphate, which is also an important intermediate in the biosynthesis of ubiquinone, dolichol, heme and prenylated proteins. Activity by the mevalonate kinase ERG12 first converts mevalonate into 5-phosphomevalonate. 5-phosphomevalonate is then further converted to 5-diphosphomevalonate by the phosphomevalonate kinase ERG8. The diphosphomevalonate decarboxylase MVD1/ERG19 then produces isopentenyl diphosphate. The isopentenyl-diphosphate delta-isomerase IDI1 then catalyzes the 1,3-allylic rearrangement of the homoallylic substrate isopentenyl (IPP) to its highly electrophilic allylic isomer, dimethylallyl diphosphate (DMAPP). Finally the farnesyl diphosphate synthase ERG20 catalyzes the sequential condensation of isopentenyl pyrophosphate with dimethylallyl pyrophosphate, and then with the resultant geranylpyrophosphate to the ultimate product farnesyl pyrophosphate. This Debaryomyces hansenii (strain ATCC 36239 / CBS 767 / BCRC 21394 / JCM 1990 / NBRC 0083 / IGC 2968) (Yeast) protein is Diphosphomevalonate decarboxylase.